Here is a 333-residue protein sequence, read N- to C-terminus: Holliday junction branch migration complex subunit RuvB (333 aa).

The large ATPase domain (RuvB-L) stretch occupies residues 1–182 (MDERLLSQSH…FGVTLKLEYY (182 aa)). ATP is bound by residues Leu21, Arg22, Gly63, Lys66, Thr67, Thr68, 129-131 (EDY), Arg172, Tyr182, and Arg219. Position 67 (Thr67) interacts with Mg(2+). Residues 183–253 (ETHELAAIVS…LASDALDRLH (71 aa)) are small ATPAse domain (RuvB-S). Residues 256 to 333 (ALGLDEVDHR…SHFGYEEEEE (78 aa)) are head domain (RuvB-H). Residues Arg311 and Arg316 each coordinate DNA.

Belongs to the RuvB family. Homohexamer. Forms an RuvA(8)-RuvB(12)-Holliday junction (HJ) complex. HJ DNA is sandwiched between 2 RuvA tetramers; dsDNA enters through RuvA and exits via RuvB. An RuvB hexamer assembles on each DNA strand where it exits the tetramer. Each RuvB hexamer is contacted by two RuvA subunits (via domain III) on 2 adjacent RuvB subunits; this complex drives branch migration. In the full resolvosome a probable DNA-RuvA(4)-RuvB(12)-RuvC(2) complex forms which resolves the HJ.

It is found in the cytoplasm. It carries out the reaction ATP + H2O = ADP + phosphate + H(+). Functionally, the RuvA-RuvB-RuvC complex processes Holliday junction (HJ) DNA during genetic recombination and DNA repair, while the RuvA-RuvB complex plays an important role in the rescue of blocked DNA replication forks via replication fork reversal (RFR). RuvA specifically binds to HJ cruciform DNA, conferring on it an open structure. The RuvB hexamer acts as an ATP-dependent pump, pulling dsDNA into and through the RuvAB complex. RuvB forms 2 homohexamers on either side of HJ DNA bound by 1 or 2 RuvA tetramers; 4 subunits per hexamer contact DNA at a time. Coordinated motions by a converter formed by DNA-disengaged RuvB subunits stimulates ATP hydrolysis and nucleotide exchange. Immobilization of the converter enables RuvB to convert the ATP-contained energy into a lever motion, pulling 2 nucleotides of DNA out of the RuvA tetramer per ATP hydrolyzed, thus driving DNA branch migration. The RuvB motors rotate together with the DNA substrate, which together with the progressing nucleotide cycle form the mechanistic basis for DNA recombination by continuous HJ branch migration. Branch migration allows RuvC to scan DNA until it finds its consensus sequence, where it cleaves and resolves cruciform DNA. This Exiguobacterium sp. (strain ATCC BAA-1283 / AT1b) protein is Holliday junction branch migration complex subunit RuvB.